Reading from the N-terminus, the 52-residue chain is Ovomucoid (52 aa).

Residues 2–52 (VDCSEYPKPACPKDYRPVCGSDNKTYGNKCNFCNAVVESNGTLTLNRFGKC) enclose the Kazal-like domain. Disulfide bonds link C4–C34, C12–C31, and C20–C52. N-linked (GlcNAc...) asparagine glycosylation occurs at N41.

The protein resides in the secreted. This chain is Ovomucoid, found in Coturnix delegorguei (Harlequin quail).